Here is a 322-residue protein sequence, read N- to C-terminus: Aldo-keto reductase family 1 member C13 (322 aa).

Residues 20 to 24 and aspartate 50 each bind NAD(+); that span reads GFGTY. Residue tyrosine 55 is the Proton donor of the active site. Histidine 117 is a substrate binding site. NAD(+) is bound by residues 166–167, glutamine 190, 216–224, and 270–280; these read SN, FGALGTQRY, and QSFYESEMKEN.

The protein belongs to the aldo/keto reductase family. As to quaternary structure, monomer. In terms of processing, the N-terminus is blocked.

It carries out the reaction morphine + NAD(+) = morphinone + NADH + H(+). The catalysed reaction is morphine + NADP(+) = morphinone + NADPH + H(+). Strongly inhibited by sulfhydryl reagents and ketamine, but not by pyrazole, barbital and indomethacine. In terms of biological role, catalyzes the dehydrogenation of morphine to morphinone. The enzyme also exhibits significant activity for a variety of cyclic and alicyclic alcohols. In addition to xenobiotics, the enzyme catalyzes the dehydrogenation of 17-beta-hydroxysteroids with much higher affinities than morphine. Uses both NAD and NADP, but the activity is much greater with NAD than with NADP. This Mesocricetus auratus (Golden hamster) protein is Aldo-keto reductase family 1 member C13 (AKR1C13).